We begin with the raw amino-acid sequence, 127 residues long: Mating pheromone 4 (127 aa).

The first 16 residues, 1–16, serve as a signal peptide directing secretion; the sequence is MKAIFIILAILMVTQA. Residues 17-42 constitute a propeptide that is removed on maturation; it reads FKMTSKVKSMNMSRNMSKNTSTLGTK.

The protein resides in the secreted. Mating ciliate pheromones (or gamones) are diffusible extracellular communication signals that distinguish different intraspecific classes of cells commonly referred to as 'mating types'. They prepare the latter for conjugation by changing their cell surface properties. In Euplotoides octocarinatus (Freshwater ciliate), this protein is Mating pheromone 4 (PHR4).